A 41-amino-acid polypeptide reads, in one-letter code: Large ribosomal subunit protein bL36 (41 aa).

The protein belongs to the bacterial ribosomal protein bL36 family.

The sequence is that of Large ribosomal subunit protein bL36 from Sinorhizobium medicae (strain WSM419) (Ensifer medicae).